Reading from the N-terminus, the 346-residue chain is Biotin synthase (346 aa).

Residues 38–256 (RQVQVSTLLS…IAVARIMMPT (219 aa)) form the Radical SAM core domain. [4Fe-4S] cluster is bound by residues Cys53, Cys57, and Cys60. The [2Fe-2S] cluster site is built by Cys97, Cys128, Cys188, and Arg260.

Belongs to the radical SAM superfamily. Biotin synthase family. In terms of assembly, homodimer. [4Fe-4S] cluster serves as cofactor. Requires [2Fe-2S] cluster as cofactor.

It carries out the reaction (4R,5S)-dethiobiotin + (sulfur carrier)-SH + 2 reduced [2Fe-2S]-[ferredoxin] + 2 S-adenosyl-L-methionine = (sulfur carrier)-H + biotin + 2 5'-deoxyadenosine + 2 L-methionine + 2 oxidized [2Fe-2S]-[ferredoxin]. Its pathway is cofactor biosynthesis; biotin biosynthesis; biotin from 7,8-diaminononanoate: step 2/2. Catalyzes the conversion of dethiobiotin (DTB) to biotin by the insertion of a sulfur atom into dethiobiotin via a radical-based mechanism. In Escherichia coli O6:K15:H31 (strain 536 / UPEC), this protein is Biotin synthase.